A 164-amino-acid chain; its full sequence is Aspartate carbamoyltransferase regulatory chain (164 aa).

Residues Cys116, Cys121, Cys146, and Cys149 each contribute to the Zn(2+) site.

Belongs to the PyrI family. In terms of assembly, contains catalytic and regulatory chains. Zn(2+) serves as cofactor.

In terms of biological role, involved in allosteric regulation of aspartate carbamoyltransferase. This is Aspartate carbamoyltransferase regulatory chain from Staphylothermus marinus (strain ATCC 43588 / DSM 3639 / JCM 9404 / F1).